Reading from the N-terminus, the 303-residue chain is WD repeat-containing protein 38 (303 aa).

7 WD repeats span residues 24 to 63 (QHHG…LLWR), 66 to 105 (GHRG…CLHV), 108 to 147 (GHQR…RVHL), 150 to 189 (GHCD…PVVS), 195 to 233 (GHTG…LPLQ), 236 to 277 (GHTI…ETLK), and 279 to 303 (MLDV…AVTR).

This Mus musculus (Mouse) protein is WD repeat-containing protein 38 (Wdr38).